Consider the following 424-residue polypeptide: UDP-N-acetylglucosamine 1-carboxyvinyltransferase (424 aa).

22–23 is a binding site for phosphoenolpyruvate; it reads KN. Arginine 93 serves as a coordination point for UDP-N-acetyl-alpha-D-glucosamine. Cysteine 117 functions as the Proton donor in the catalytic mechanism. A 2-(S-cysteinyl)pyruvic acid O-phosphothioketal modification is found at cysteine 117. UDP-N-acetyl-alpha-D-glucosamine-binding positions include 122–126, aspartate 307, and isoleucine 329; that span reads RPIDL.

Belongs to the EPSP synthase family. MurA subfamily.

The protein localises to the cytoplasm. The catalysed reaction is phosphoenolpyruvate + UDP-N-acetyl-alpha-D-glucosamine = UDP-N-acetyl-3-O-(1-carboxyvinyl)-alpha-D-glucosamine + phosphate. The protein operates within cell wall biogenesis; peptidoglycan biosynthesis. In terms of biological role, cell wall formation. Adds enolpyruvyl to UDP-N-acetylglucosamine. This chain is UDP-N-acetylglucosamine 1-carboxyvinyltransferase, found in Chlorobium phaeovibrioides (strain DSM 265 / 1930) (Prosthecochloris vibrioformis (strain DSM 265)).